The chain runs to 176 residues: NAD(P)H-quinone oxidoreductase subunit 6, chloroplastic (176 aa).

The next 5 membrane-spanning stretches (helical) occupy residues 10 to 30 (FILV…VFFT), 32 to 52 (TIFS…FYIL), 63 to 83 (LLIY…FMNG), 92 to 112 (VWTV…ISQI), and 152 to 172 (FFLP…GAIF).

Belongs to the complex I subunit 6 family. NDH is composed of at least 16 different subunits, 5 of which are encoded in the nucleus.

The protein resides in the plastid. Its subcellular location is the chloroplast thylakoid membrane. It catalyses the reaction a plastoquinone + NADH + (n+1) H(+)(in) = a plastoquinol + NAD(+) + n H(+)(out). The enzyme catalyses a plastoquinone + NADPH + (n+1) H(+)(in) = a plastoquinol + NADP(+) + n H(+)(out). Functionally, NDH shuttles electrons from NAD(P)H:plastoquinone, via FMN and iron-sulfur (Fe-S) centers, to quinones in the photosynthetic chain and possibly in a chloroplast respiratory chain. The immediate electron acceptor for the enzyme in this species is believed to be plastoquinone. Couples the redox reaction to proton translocation, and thus conserves the redox energy in a proton gradient. This chain is NAD(P)H-quinone oxidoreductase subunit 6, chloroplastic (ndhG), found in Phaseolus vulgaris (Kidney bean).